The following is a 99-amino-acid chain: Malonate decarboxylase acyl carrier protein (99 aa).

Residue S25 is modified to O-(phosphoribosyl dephospho-coenzyme A)serine.

This sequence belongs to the MdcC family. Covalently binds the prosthetic group of malonate decarboxylase.

The protein localises to the cytoplasm. Subunit of malonate decarboxylase, it is an acyl carrier protein to which acetyl and malonyl thioester residues are bound via a 2'-(5''-phosphoribosyl)-3'-dephospho-CoA prosthetic group and turn over during the catalytic mechanism. The polypeptide is Malonate decarboxylase acyl carrier protein (Pseudomonas fluorescens (strain Pf0-1)).